A 229-amino-acid polypeptide reads, in one-letter code: Probable methylthioribulose-1-phosphate dehydratase (229 aa).

Cysteine 97 serves as a coordination point for substrate. Zn(2+) contacts are provided by histidine 115 and histidine 117. Residue glutamate 139 is the Proton donor/acceptor of the active site. Residue histidine 195 participates in Zn(2+) binding.

This sequence belongs to the aldolase class II family. MtnB subfamily. Zn(2+) serves as cofactor.

The protein localises to the cytoplasm. The enzyme catalyses 5-(methylsulfanyl)-D-ribulose 1-phosphate = 5-methylsulfanyl-2,3-dioxopentyl phosphate + H2O. It functions in the pathway amino-acid biosynthesis; L-methionine biosynthesis via salvage pathway; L-methionine from S-methyl-5-thio-alpha-D-ribose 1-phosphate: step 2/6. Functionally, catalyzes the dehydration of methylthioribulose-1-phosphate (MTRu-1-P) into 2,3-diketo-5-methylthiopentyl-1-phosphate (DK-MTP-1-P). In Acyrthosiphon pisum (Pea aphid), this protein is Probable methylthioribulose-1-phosphate dehydratase.